The sequence spans 321 residues: MNSKLEQLKTMTTVVADTGDIDAIRHWRPEDATTNPSLLLKAAASEAYRPMLEKAVAHAAQHGGSDAEQLTVATDMLAVLAGKEILGLIPGVVSTEVDARLSFDTSATLERARRLVDFYDRQGVDTNRVLIKIASTWEGIRAAEQLEKEGIRCNLTLLFSFVQAVACAQAGVHLISPFVGRILDWHLASSGRDSYPAEEDPGVFSVSRIYNYYKANGFNTVVMGASFRNTGEIEMLAGCDRLTISPALLQDLKDDQGTLARKLNPETASSPDKPGQINEKQFRWESNEDAMATEKLADGIRRFAADQIELEHRVRQLAQAA.

Residue lysine 132 is the Schiff-base intermediate with substrate of the active site.

The protein belongs to the transaldolase family. Type 1 subfamily. Homodimer.

It localises to the cytoplasm. The enzyme catalyses D-sedoheptulose 7-phosphate + D-glyceraldehyde 3-phosphate = D-erythrose 4-phosphate + beta-D-fructose 6-phosphate. It functions in the pathway carbohydrate degradation; pentose phosphate pathway; D-glyceraldehyde 3-phosphate and beta-D-fructose 6-phosphate from D-ribose 5-phosphate and D-xylulose 5-phosphate (non-oxidative stage): step 2/3. Transaldolase is important for the balance of metabolites in the pentose-phosphate pathway. The polypeptide is Transaldolase (Marinobacter nauticus (strain ATCC 700491 / DSM 11845 / VT8) (Marinobacter aquaeolei)).